Here is a 248-residue protein sequence, read N- to C-terminus: Ribosomal RNA small subunit methyltransferase G (248 aa).

S-adenosyl-L-methionine contacts are provided by residues Gly-93, Leu-98, 143–144 (AE), and Arg-161.

The protein belongs to the methyltransferase superfamily. RNA methyltransferase RsmG family.

Its subcellular location is the cytoplasm. Its function is as follows. Specifically methylates the N7 position of guanine in position 518 of 16S rRNA. The protein is Ribosomal RNA small subunit methyltransferase G of Mycobacterium leprae (strain Br4923).